The primary structure comprises 291 residues: Short-chain dehydrogenase/reductase GME11359 (291 aa).

The NADP(+) site is built by L18, D67, N96, Y177, K181, and V209. Y177 functions as the Proton acceptor in the catalytic mechanism. Catalysis depends on K181, which acts as the Lowers pKa of active site Tyr.

This sequence belongs to the short-chain dehydrogenases/reductases (SDR) family.

The protein operates within secondary metabolite biosynthesis. Its function is as follows. Short-chain dehydrogenase/reductase; part of the gene cluster that mediates the biosynthesis of dibenzodioxocinones such as pestalotiollide B, a novel class of inhibitors against cholesterol ester transfer protein (CEPT). The biosynthesis initiates from condensation of acetate and malonate units catalyzed by the non-reducing PKS pks8/GME11356. Pks8/GME11356 lacks a thioesterase (TE) domain, which is important to the cyclizing of the third ring of atrochrysone carboxylic acid, and the esterase GME11355 might play the role of TE and catalyzes the cyclization reaction of the C ring. The lactamase-like protein GME11357 (or other beta-lactamases in Pestalotiopsis microspora) probably hydrolyzes the thioester bond between the ACP of pks8/GME11356 and the intermediate to release atrochrysone carboxylic acid, which is spontaneously dehydrates to form endocrocin anthrone. Endocrocin anthrone is further converted to emodin via the endocrocin intermediate. Emodin is then oxidized by several enzymes such as the Baeyer-Villiger oxidase GME11358, the oxidoreductase GME11367, the short chain dehydrogenase/reductase GME11373, as well as by other oxidoreductases from the cluster, to modify the A and C rings and open the B ring, and finally yield monodictyphenone. The prenyltransferase GME11375 may catalyze the addition reaction between the C5 side chains and the carbon bone of dibenzodioxocinones. The remaining biochemical reactions to the final product dibenzodioxocinones should be methylation catalyzed by methyltransferase GME11366 and reduction and lactonization reaction catalyzed by a series of oxidordeuctases. The chain is Short-chain dehydrogenase/reductase GME11359 from Pestalotiopsis microspora.